A 389-amino-acid chain; its full sequence is Na(+)/H(+) antiporter NhaA (389 aa).

11 helical membrane passes run 14–34 (AGGI…NSPL), 59–79 (LILW…GLEV), 95–115 (SLPT…YLLF), 124–144 (AGWA…MALL), 154–174 (VFLL…IALF), 177–197 (TDLS…LVGL), 213–233 (LILW…GVII), 257–277 (PWST…VYVG), 292–312 (IALG…YIAV), 328–348 (IAPV…IASL), and 363–383 (LGTL…LSKV).

Belongs to the NhaA Na(+)/H(+) (TC 2.A.33) antiporter family.

The protein resides in the cell inner membrane. The catalysed reaction is Na(+)(in) + 2 H(+)(out) = Na(+)(out) + 2 H(+)(in). Na(+)/H(+) antiporter that extrudes sodium in exchange for external protons. The chain is Na(+)/H(+) antiporter NhaA from Shewanella baltica (strain OS195).